Consider the following 257-residue polypeptide: Phosphonates import ATP-binding protein PhnC (257 aa).

One can recognise an ABC transporter domain in the interval isoleucine 2–alanine 246. Glycine 35–serine 42 is a binding site for ATP.

It belongs to the ABC transporter superfamily. Phosphonates importer (TC 3.A.1.9.1) family. The complex is composed of two ATP-binding proteins (PhnC), two transmembrane proteins (PhnE) and a solute-binding protein (PhnD).

It is found in the cell membrane. It carries out the reaction phosphonate(out) + ATP + H2O = phosphonate(in) + ADP + phosphate + H(+). Functionally, part of the ABC transporter complex PhnCDE involved in phosphonates import. Responsible for energy coupling to the transport system. The chain is Phosphonates import ATP-binding protein PhnC from Bacillus thuringiensis subsp. konkukian (strain 97-27).